The following is a 1009-amino-acid chain: MICAL-like protein 2 (1009 aa).

One can recognise a Calponin-homology (CH) domain in the interval 1–107; it reads MAAIKALQEW…YVSQYYNYFH (107 aa). The tract at residues 1 to 260 is forms an intramolecular interaction with the C-terminal coiled coil domain keeping the protein in a closed conformation; the sequence is MAAIKALQEW…KSSNLASRKP (260 aa). Phosphoserine is present on residues Ser110, Ser143, and Ser153. Disordered stretches follow at residues 114–180, 247–268, 348–447, and 655–834; these read GMAG…PGTA, SVSPKSSNLASRKPGGVTADTR, NSSP…TSKV, and SPSI…TSPV. Polar residues predominate over residues 144 to 171; the sequence is PAQTQRSPLSPARTNPVVQRNEGGSQRP. The region spanning 186-248 is the LIM zinc-binding domain; that stretch reads SICGVCGKHV…THHSSEVTSV (63 aa). Phosphoserine is present on Ser249. A necessary and sufficient for interaction with actinins region spans residues 261–393; it reads GGVTADTRPF…QGQTASKGVK (133 aa). Residues 261-805 are mediates targeting to the cell plasma membrane; the sequence is GGVTADTRPF…EDGTRSCKEE (545 aa). Residues 348–419 are compositionally biased toward polar residues; sequence NSSPIGWSSP…AWTSSASKTQ (72 aa). The segment covering 430 to 442 has biased composition (pro residues); that stretch reads PSAPAPASAPAPA. The segment covering 694 to 730 has biased composition (basic and acidic residues); that stretch reads EGWRARLKPVDKKTPAGRSLEQKEPVLAEPRIGDTSR. Low complexity-rich tracts occupy residues 731–746 and 755–769; these read KASSSSDSSVHITLTS and PAGSGPSPAALSPSP. 2 positions are modified to phosphoserine: Ser766 and Ser768. The segment covering 791 to 817 has biased composition (basic and acidic residues); the sequence is EPKKQEDGTRSCKEEKSPTRWSRERSA. A forms an intramolecular interaction with the N-terminal Calponin-homology and LIM zinc-binding domains-containing region keeping the protein in a closed conformation region spans residues 806-913; sequence KSPTRWSRER…LMYKSKDQRL (108 aa). Ser832 carries the phosphoserine modification. The bMERB domain maps to 833 to 980; sequence PVRLHPDYIP…EQEEDQMLEN (148 aa). Residues 841 to 880 are a coiled coil; sequence IPQEELQRQLQDIESQLDALELRGVELEKRLRAAEGDASE. The interval 913–1009 is mediates interaction with RAB13 and is required for transition from the closed to the open conformation; it reads LEEQQLDLQG…WSSKSKSGQA (97 aa).

In terms of assembly, interacts with RAB13 (GTP-bound form); competes with RAB8A and is involved in tight junctions assembly. Interacts with RAB8A; competes with RAB13 and is involved in E-cadherin endocytic recycling. Interacts with RAB8B. Interacts (preferentially in opened conformation) with ACTN1 and ACTN4; stimulated by RAB13 activation. Interacts (via calponin-homology (CH) domain) with the filamins FLNA, FLNB and FLNC (via actin-binding domain). As to expression, detected in brain, lung, liver and kidney (at protein level).

The protein resides in the cell membrane. It localises to the cell junction. It is found in the tight junction. The protein localises to the recycling endosome. Its subcellular location is the cell projection. The protein resides in the neuron projection. It localises to the cytoplasm. It is found in the cytoskeleton. Effector of small Rab GTPases RAB8A and RAB13 which is involved in junctional complexes assembly through the regulation of cell adhesion molecules transport to the plasma membrane and actin cytoskeleton reorganization. Regulates the endocytic recycling of occludins, claudins and E-cadherin to the plasma membrane and may thereby regulate the establishment of tight junctions and adherens junctions. In parallel, may regulate actin cytoskeleton reorganization directly through interaction with F-actin or indirectly through actinins and filamins. Undergoes liquid-liquid phase separation to form tubular recycling endosomes. Plays 2 sequential roles in the biogenesis of tubular recycling endosomes: first organizes phase separation and then the closed form formed by interaction with RAB8A promotes endosomal tubulation. In Mus musculus (Mouse), this protein is MICAL-like protein 2 (Micall2).